The primary structure comprises 344 residues: Protein YRO2 (344 aa).

The Extracellular portion of the chain corresponds to 1 to 34 (MSDYVELLKRGGNEAIKINPPTGADFHITSRGSD). The chain crosses the membrane as a helical span at residues 35-55 (WLFTVFCVNLLFGVILVPLMF). Residues 56 to 62 (RKPVKDR) lie on the Cytoplasmic side of the membrane. A helical transmembrane segment spans residues 63–83 (FVYYTAIAPNLFMSIAYFTMA). The Extracellular portion of the chain corresponds to 84-119 (SNLGWIPVRAKYNHVQTSTQKEHPGYRQIFYARYVG). The helical transmembrane segment at 120-140 (WFLAFPWPIIQMSLLGGTPLW) threads the bilayer. Q141 is a topological domain (cytoplasmic). The chain crosses the membrane as a helical span at residues 142 to 162 (IAFNVGMTEIFTVCWLIAACV). Residues 163 to 172 (HSTYKWGYYT) lie on the Extracellular side of the membrane. The chain crosses the membrane as a helical span at residues 173 to 193 (IGIGAAIVVCISLMTTTFNLV). The Cytoplasmic segment spans residues 194–202 (KARGKDVSN). The helical transmembrane segment at 203–223 (VFITFMSVIMFLWLIAYPTCF) threads the bilayer. The Extracellular portion of the chain corresponds to 224–238 (GITDGGNVLQPDSAT). The chain crosses the membrane as a helical span at residues 239–259 (IFYGIIDLLILSILPVLFMPL). Topologically, residues 260–344 (ANYLGIERLG…EEEDVATDSE (85 aa)) are cytoplasmic. The interval 282–344 (PVAEKKMPSP…EEEDVATDSE (63 aa)) is disordered. Residue K286 forms a Glycyl lysine isopeptide (Lys-Gly) (interchain with G-Cter in ubiquitin) linkage. A Phosphoserine modification is found at S293. The segment covering 297-306 (SDSDSSIKEK) has biased composition (basic and acidic residues). Over residues 307–330 (LKLKKKHKKDKKKAKKAKKAKKAK) the composition is skewed to basic residues. The span at 334-344 (EEEEDVATDSE) shows a compositional bias: acidic residues. The residue at position 341 (T341) is a Phosphothreonine. Position 343 is a phosphoserine (S343).

This sequence belongs to the archaeal/bacterial/fungal opsin family.

It is found in the membrane. The chain is Protein YRO2 (YRO2) from Saccharomyces cerevisiae (strain ATCC 204508 / S288c) (Baker's yeast).